The primary structure comprises 334 residues: N-acetyl-gamma-glutamyl-phosphate reductase (334 aa).

Cysteine 154 is a catalytic residue.

This sequence belongs to the NAGSA dehydrogenase family. Type 1 subfamily.

It is found in the cytoplasm. The catalysed reaction is N-acetyl-L-glutamate 5-semialdehyde + phosphate + NADP(+) = N-acetyl-L-glutamyl 5-phosphate + NADPH + H(+). It participates in amino-acid biosynthesis; L-arginine biosynthesis; N(2)-acetyl-L-ornithine from L-glutamate: step 3/4. Functionally, catalyzes the NADPH-dependent reduction of N-acetyl-5-glutamyl phosphate to yield N-acetyl-L-glutamate 5-semialdehyde. The chain is N-acetyl-gamma-glutamyl-phosphate reductase from Buchnera aphidicola subsp. Schizaphis graminum (strain Sg).